Consider the following 90-residue polypeptide: Electron transfer flavoprotein regulatory factor 1 (90 aa).

It belongs to the complex I LYR family. In terms of assembly, homotetramer. Interacts with NDUFAB1. Interacts with ETFA. Interacts with ETFB.

The protein localises to the mitochondrion. Functionally, acts as a regulator of the electron transfer flavoprotein by promoting the removal of flavin from the ETF holoenzyme (composed of ETFA and ETFB). In Homo sapiens (Human), this protein is Electron transfer flavoprotein regulatory factor 1.